The following is a 2718-amino-acid chain: Zinc finger protein 40 (2718 aa).

3 disordered regions span residues 58–182, 210–256, and 335–373; these read HLKK…CISS, LSQK…AESQ, and GLTSPSSRSQVTPQNQQMDSASPLSISPANSTQSPPMPI. Phosphoserine is present on Ser-141. Basic and acidic residues predominate over residues 142-158; that stretch reads ELRRWRSEGADPAKFSD. Composition is skewed to polar residues over residues 164–182 and 237–256; these read DSSSLSSKTRTDNSECISS and KNSSMDAPNQTSQELVAESQ. Residues 406 to 428 form a C2H2-type 1 zinc finger; sequence YICEYCNRACAKPSVLLKHIRSH. Thr-429 carries the phosphothreonine modification. The C2H2-type 2 zinc finger occupies 434–456; sequence YPCVTCGFSFKTKSNLYKHKKSH. A phosphoserine mark is found at Ser-476, Ser-479, Ser-492, Ser-495, Ser-571, and Ser-577. Residues 484–511 are disordered; it reads SIHSDVEDSGESEEEGATDERQHDLGAM. Residues 490 to 500 are compositionally biased toward acidic residues; the sequence is EDSGESEEEGA. A disordered region spans residues 574–727; that stretch reads RTDSPKAMDP…TPSALPTGEK (154 aa). The span at 576–585 shows a compositional bias: basic and acidic residues; the sequence is DSPKAMDPKP. Residues 588-612 are compositionally biased toward polar residues; sequence SSAQKQKDLQVTNVQPLSANMSQGG. Over residues 617–626 the composition is skewed to basic and acidic residues; the sequence is ETNENSHQKG. Composition is skewed to polar residues over residues 644–687 and 698–721; these read AQLQ…QTVS and STEQDSGRSNGPSAALVTTSTPSA. Phosphoserine is present on residues Ser-670 and Ser-681. The CCHC HIVEP-type zinc-finger motif lies at 956–986; sequence GTMFECETCRNRYRKLENFENHKKFYCSELH. The segment at 1022-1062 is disordered; it reads WEQTPQIRKRRKMKSVGDDEELQQNESGTSPKSSEGLQFQN. Ser-1036, Ser-1051, Ser-1091, Ser-1158, Ser-1161, and Ser-1180 each carry phosphoserine. Positions 1045-1062 are enriched in polar residues; it reads QNESGTSPKSSEGLQFQN. A disordered region spans residues 1138–1169; it reads HTNSLSRPNSFDKPEPFERASPVSFQELNRTG. Positions 1160-1169 are enriched in polar residues; that stretch reads VSFQELNRTG. 2 stretches are compositionally biased toward basic and acidic residues: residues 1202 to 1219 and 1246 to 1259; these read LRGELQESSRKSPSERHV and DLEAQCHDQEKSEK. Disordered stretches follow at residues 1202-1282, 1384-1414, and 1523-1548; these read LRGE…PKKK, RSKSFDCGSITPPQTTPLTELQPPSSPSRVG, and SHQSTQLSLQVSTQGSKPDKNSVLSG. Phosphothreonine is present on Thr-1268. Composition is skewed to low complexity over residues 1394-1406 and 1523-1536; these read TPPQTTPLTELQP and SHQSTQLSLQVSTQ. 4 positions are modified to phosphoserine: Ser-1735, Ser-1740, Ser-1749, and Ser-1753. The segment covering 1871-1883 has biased composition (polar residues); sequence VRSSPAPSENTHI. Positions 1871-1911 are disordered; the sequence is VRSSPAPSENTHISPLKCTDNNQERKSPGVKNQGDKVNIQE. A phosphoserine mark is found at Ser-1884 and Ser-2033. 2 consecutive C2H2-type zinc fingers follow at residues 2088 to 2110 and 2116 to 2140; these read YICEECGIRCKKPSMLKKHIRTH and YHCTYCNFSFKTKGNLTKHMKSKAH. Disordered stretches follow at residues 2155 to 2228, 2265 to 2303, 2327 to 2381, and 2572 to 2718; these read DEQD…PVST, SDYNRKTLSPGKARQRAARDENDTIPSVDTSRSPCHQMS, SPSS…THLF, and PASQ…VIAT. A compositionally biased stretch (basic and acidic residues) spans 2164–2175; that stretch reads EKQRFSYERSGY. The segment covering 2176 to 2198 has biased composition (acidic residues); it reads DLEESDGPDEDDNENEDDDEDSQ. 2 stretches are compositionally biased toward polar residues: residues 2199-2226 and 2288-2300; these read AESVLSATPSVTASPQHLPSRSSLQDPV and TIPSVDTSRSPCH. Residues Ser-2327 and Ser-2599 each carry the phosphoserine modification. Residues 2573 to 2608 show a composition bias toward polar residues; sequence ASQSKACETQPKQTSVASANQVSRTESPQGLPTVQR. Residues 2623–2637 are compositionally biased toward basic and acidic residues; the sequence is DHARLDGLSKMDTEK. Residues 2651-2663 show a composition bias toward polar residues; the sequence is TSIQGQPASTSQP. Phosphoserine is present on residues Ser-2669 and Ser-2682.

In terms of assembly, interacts with UTP4.

Its subcellular location is the nucleus. The protein resides in the cytoplasm. This protein specifically binds to the DNA sequence 5'-GGGACTTTCC-3' which is found in the enhancer elements of numerous viral promoters such as those of SV40, CMV, or HIV-1. In addition, related sequences are found in the enhancer elements of a number of cellular promoters, including those of the class I MHC, interleukin-2 receptor, and interferon-beta genes. It may act in T-cell activation. Involved in activating HIV-1 gene expression. Isoform 2 and isoform 3 also bind to the IPCS (IRF1 and p53 common sequence) DNA sequence in the promoter region of interferon regulatory factor 1 and p53 genes and are involved in transcription regulation of these genes. Isoform 2 does not activate HIV-1 gene expression. Isoform 2 and isoform 3 may be involved in apoptosis. The protein is Zinc finger protein 40 (HIVEP1) of Homo sapiens (Human).